The sequence spans 401 residues: Alpha-(1,4)-fucosyltransferase (401 aa).

Residues 1 to 4 (MPMR) are Cytoplasmic-facing. Residues 5 to 27 (YLNAMAALLMMFFTLLILSFTGI) form a helical; Signal-anchor for type II membrane protein membrane-spanning segment. At 28–401 (LEFPSASTSM…SRRGGKNAGV (374 aa)) the chain is on the lumenal side. A glycan (N-linked (GlcNAc...) asparagine) is linked at Asn85.

The protein belongs to the glycosyltransferase 10 family. In terms of tissue distribution, present in root, stem, flower buds and green siliques.

Its subcellular location is the golgi apparatus. It localises to the golgi stack membrane. Its pathway is protein modification; protein glycosylation. Functionally, may be involved in cell wall synthesis. Catalyzes alpha-1,4 glycosidic linkages and generates Lewis-a epitopes. The polypeptide is Alpha-(1,4)-fucosyltransferase (FUT13) (Arabidopsis thaliana (Mouse-ear cress)).